Here is a 396-residue protein sequence, read N- to C-terminus: Carbamoyl phosphate synthase small chain (396 aa).

The tract at residues 1 to 204 is CPSase; it reads MTQHDNDPAW…WDKGFGQQDK (204 aa). Positions 59, 256, and 258 each coordinate L-glutamine. One can recognise a Glutamine amidotransferase type-1 domain in the interval 208 to 396; sequence NVVAIDYGIK…AELMRQKKSA (189 aa). Cys-285 (nucleophile) is an active-site residue. Positions 286, 289, 327, 329, and 330 each coordinate L-glutamine. Active-site residues include His-369 and Glu-371.

This sequence belongs to the CarA family. In terms of assembly, composed of two chains; the small (or glutamine) chain promotes the hydrolysis of glutamine to ammonia, which is used by the large (or ammonia) chain to synthesize carbamoyl phosphate. Tetramer of heterodimers (alpha,beta)4.

It catalyses the reaction hydrogencarbonate + L-glutamine + 2 ATP + H2O = carbamoyl phosphate + L-glutamate + 2 ADP + phosphate + 2 H(+). The catalysed reaction is L-glutamine + H2O = L-glutamate + NH4(+). It participates in amino-acid biosynthesis; L-arginine biosynthesis; carbamoyl phosphate from bicarbonate: step 1/1. The protein operates within pyrimidine metabolism; UMP biosynthesis via de novo pathway; (S)-dihydroorotate from bicarbonate: step 1/3. Its function is as follows. Small subunit of the glutamine-dependent carbamoyl phosphate synthetase (CPSase). CPSase catalyzes the formation of carbamoyl phosphate from the ammonia moiety of glutamine, carbonate, and phosphate donated by ATP, constituting the first step of 2 biosynthetic pathways, one leading to arginine and/or urea and the other to pyrimidine nucleotides. The small subunit (glutamine amidotransferase) binds and cleaves glutamine to supply the large subunit with the substrate ammonia. This Bradyrhizobium diazoefficiens (strain JCM 10833 / BCRC 13528 / IAM 13628 / NBRC 14792 / USDA 110) protein is Carbamoyl phosphate synthase small chain.